The sequence spans 87 residues: DNA-directed RNA polymerase subunit omega (87 aa).

This sequence belongs to the RNA polymerase subunit omega family. In terms of assembly, the RNAP catalytic core consists of 2 alpha, 1 beta, 1 beta' and 1 omega subunit. When a sigma factor is associated with the core the holoenzyme is formed, which can initiate transcription.

The catalysed reaction is RNA(n) + a ribonucleoside 5'-triphosphate = RNA(n+1) + diphosphate. Its function is as follows. Promotes RNA polymerase assembly. Latches the N- and C-terminal regions of the beta' subunit thereby facilitating its interaction with the beta and alpha subunits. In Pseudomonas fluorescens (strain Pf0-1), this protein is DNA-directed RNA polymerase subunit omega.